The following is a 325-amino-acid chain: Cytochrome c1, heme protein, mitochondrial (325 aa).

Residues 1 to 84 constitute a mitochondrion transit peptide; it reads MAAAAATLRG…AVALHSAVSA (84 aa). Residues 85–281 are Mitochondrial intermembrane-facing; it reads SDLELHPPSY…TFLRWAAEPE (197 aa). The region spanning 108–209 is the Cytochrome c domain; the sequence is TSIRRGFQVY…IVRARHGGED (102 aa). Positions 121, 124, 125, and 244 each coordinate heme c. Residues 282 to 315 traverse the membrane as a helical segment; it reads HDHRKRMGLKMLLMMGLLLPLVYAMKRHKWSVLK. The Mitochondrial matrix portion of the chain corresponds to 316-325; that stretch reads SRKLAYRPPK.

Belongs to the cytochrome c family. As to quaternary structure, component of the ubiquinol-cytochrome c oxidoreductase (cytochrome b-c1 complex, complex III, CIII), a multisubunit enzyme composed of 11 subunits. The complex is composed of 3 respiratory subunits cytochrome b, cytochrome c1 and Rieske protein UQCRFS1, 2 core protein subunits UQCRC1/QCR1 and UQCRC2/QCR2, and 6 low-molecular weight protein subunits UQCRH/QCR6, UQCRB/QCR7, UQCRQ/QCR8, UQCR10/QCR9, UQCR11/QCR10 and subunit 9, the cleavage product of Rieske protein UQCRFS1. The complex exists as an obligatory dimer and forms supercomplexes (SCs) in the inner mitochondrial membrane with NADH-ubiquinone oxidoreductase (complex I, CI) and cytochrome c oxidase (complex IV, CIV), resulting in different assemblies (supercomplex SCI(1)III(2)IV(1) and megacomplex MCI(2)III(2)IV(2)). Interacts with FLVCR2; this interaction occurs in the absence of heme and is disrupted upon heme binding. Requires heme c as cofactor.

The protein localises to the mitochondrion inner membrane. The enzyme catalyses a quinol + 2 Fe(III)-[cytochrome c](out) = a quinone + 2 Fe(II)-[cytochrome c](out) + 2 H(+)(out). Its function is as follows. Component of the ubiquinol-cytochrome c oxidoreductase, a multisubunit transmembrane complex that is part of the mitochondrial electron transport chain which drives oxidative phosphorylation. The respiratory chain contains 3 multisubunit complexes succinate dehydrogenase (complex II, CII), ubiquinol-cytochrome c oxidoreductase (cytochrome b-c1 complex, complex III, CIII) and cytochrome c oxidase (complex IV, CIV), that cooperate to transfer electrons derived from NADH and succinate to molecular oxygen, creating an electrochemical gradient over the inner membrane that drives transmembrane transport and the ATP synthase. The cytochrome b-c1 complex catalyzes electron transfer from ubiquinol to cytochrome c, linking this redox reaction to translocation of protons across the mitochondrial inner membrane, with protons being carried across the membrane as hydrogens on the quinol. In the process called Q cycle, 2 protons are consumed from the matrix, 4 protons are released into the intermembrane space and 2 electrons are passed to cytochrome c. Cytochrome c1 is a catalytic core subunit containing a c-type heme. It transfers electrons from the [2Fe-2S] iron-sulfur cluster of the Rieske protein to cytochrome c. The polypeptide is Cytochrome c1, heme protein, mitochondrial (CYC1) (Bos taurus (Bovine)).